The primary structure comprises 816 residues: Transcription factor qa-1f (816 aa).

A DNA-binding region (zn(2)-C6 fungal-type) is located at residues 76 to 103 (CDQCRAAREKCDGIQPACFPCVSQGRSC). Residues 184 to 202 (SGQAAQDPSEDGQSPSEDI) show a composition bias toward polar residues. The disordered stretch occupies residues 184 to 235 (SGQAAQDPSEDGQSPSEDINVQDAGAKTSDFPHAPHLTFSAPKSSTAETRTL).

The protein localises to the nucleus. Functionally, transcription activator; part of the qa gene cluster that mediates the catabolism of quinic acid (QA) and as such, allows the use of QA as a sole carbon source. Activates the expression of qa cluster genes by binding to a 16 base-pair consensus sequence 5'-GGRTAARYRYTTAYCC-3' present in the promoters of the target genes. Regulates its own expression. May regulate the expression of many other genes inclusing genes with products in 8 mutually connected metabolic pathways: (1) starch and sucrose metabolism; (2) glycolysis/glucanogenesis; (3) TCA Cycle; (4) butanoate metabolism; (5) pyruvate metabolism; (6) aromatic amino acid and QA metabolism; (7) valine, leucine, and isoleucine degradation; and (8) transport of sugars and amino acids. This chain is Transcription factor qa-1f, found in Neurospora crassa (strain ATCC 24698 / 74-OR23-1A / CBS 708.71 / DSM 1257 / FGSC 987).